Here is a 148-residue protein sequence, read N- to C-terminus: Protein SprT-like (148 aa).

The region spanning 6-147 (LQQLVATISM…CGRCQGPIKL (142 aa)) is the SprT-like domain. His-67 is a binding site for Zn(2+). Residue Glu-68 is part of the active site. His-71 contacts Zn(2+).

It belongs to the SprT family. Zn(2+) is required as a cofactor.

It is found in the cytoplasm. The chain is Protein SprT-like from Lactiplantibacillus plantarum (strain ATCC BAA-793 / NCIMB 8826 / WCFS1) (Lactobacillus plantarum).